The chain runs to 669 residues: DNA mismatch repair protein MutL (669 aa).

The disordered stretch occupies residues 343 to 408 (SAFHRAEPEE…RAPSDSSVRE (66 aa)). Over residues 344 to 356 (AFHRAEPEERESQ) the composition is skewed to basic and acidic residues. The segment covering 357-372 (PETTPQYSPQSVSTTV) has biased composition (polar residues). Basic and acidic residues predominate over residues 390-408 (TDYEIKPRDRAPSDSSVRE).

Belongs to the DNA mismatch repair MutL/HexB family.

In terms of biological role, this protein is involved in the repair of mismatches in DNA. It is required for dam-dependent methyl-directed DNA mismatch repair. May act as a 'molecular matchmaker', a protein that promotes the formation of a stable complex between two or more DNA-binding proteins in an ATP-dependent manner without itself being part of a final effector complex. This Vibrio parahaemolyticus serotype O3:K6 (strain RIMD 2210633) protein is DNA mismatch repair protein MutL.